The sequence spans 291 residues: Nucleotide-binding protein Ccel_2290 (291 aa).

Position 8-15 (8-15 (GMSGAGKS)) interacts with ATP. GTP is bound at residue 59 to 62 (DIRG).

Belongs to the RapZ-like family.

Functionally, displays ATPase and GTPase activities. This is Nucleotide-binding protein Ccel_2290 from Ruminiclostridium cellulolyticum (strain ATCC 35319 / DSM 5812 / JCM 6584 / H10) (Clostridium cellulolyticum).